We begin with the raw amino-acid sequence, 437 residues long: 2-methylisoborneol synthase (437 aa).

The interval 32 to 125 (AHDSEATVGG…IPGLYHHPVP (94 aa)) is disordered. Over residues 59-73 (PPSPAAPPTDVPAPE) the composition is skewed to pro residues. Mg(2+) contacts are provided by Asp194, Asp195, Glu199, Asn342, Ser346, and Glu350.

It belongs to the terpene synthase family. 2-methylisoborneol synthase subfamily. Requires Mg(2+) as cofactor.

The catalysed reaction is (E)-2-methylgeranyl diphosphate + H2O = 2-methylisoborneol + diphosphate. Catalyzes the cyclization of 2-methylgeranyl diphosphate (2-MeGPP) to 2-methylisoborneol (2-MIB), which likely involves the intermediacy of 2-methyllinalyl diphosphate. This chain is 2-methylisoborneol synthase, found in Streptomyces griseus.